Consider the following 367-residue polypeptide: CCCH-type zinc finger protein moe-3 (367 aa).

A compositionally biased stretch (basic and acidic residues) spans 1 to 15; the sequence is MSKVKGDLEKSDKRP. The segment at 1-57 is disordered; it reads MSKVKGDLEKSDKRPPSSMSTGSADSGVFSSGVHASSPSHSQGSSSQSGPPSPTTQL. Low complexity predominate over residues 30–49; sequence SSGVHASSPSHSQGSSSQSG. Positions 63–92 form a coiled coil; sequence ETANLIAVNEQLRKEIAENKQIQTNQMRAL. Residues 107–126 are disordered; sequence SISPHHGFPQRPPRGERRMQ. C3H1-type zinc fingers lie at residues 130–158 and 172–200; these read SYKT…HGEE and KYKT…HPDN. The interval 235–268 is disordered; sequence NTRNSYNQQPPPMGGLEMQSSPMKSSSDSSHMRS. Residues 252–268 are compositionally biased toward low complexity; sequence MQSSPMKSSSDSSHMRS.

Exclusively expressed in the hermaphrodite gonad. Weakly distributed throughout gonadal oocytes from the mitotic stage to the developing diakinesis stage, with expression restricted to the distal region of the gonad.

Functionally, zinc-finger protein that may play a role in oocyte maturation and fertility. This is CCCH-type zinc finger protein moe-3 from Caenorhabditis elegans.